The sequence spans 318 residues: Taste receptor type 2 member 7 (318 aa).

Over 1–9 (MTDKVQTTL) the chain is Extracellular. A helical transmembrane segment spans residues 10–30 (LFLAVGEFSVGILGNAFIGLV). Residues 31-55 (NCMDWIKKRKIASIDLILTSLAISR) are Cytoplasmic-facing. A helical membrane pass occupies residues 56–76 (ICLLCVILLDCFILVLYPDVY). Residues 77–94 (ATGKEMRIIDFFWILTNH) are Extracellular-facing. A helical membrane pass occupies residues 95–115 (LSIWFATCLSIYYFFKIANFF). Residues 116–128 (HPLFLWMKWRIDR) are Cytoplasmic-facing. Residues 129-149 (VISWILLGCMVLSVFISLPAT) traverse the membrane as a helical segment. Residues 150–187 (ENLNADFRFCVKAKRKTNLTWSCRVNKTQHASIKLLLN) are Extracellular-facing. 2 N-linked (GlcNAc...) asparagine glycosylation sites follow: Asn167 and Asn175. Residues 188–208 (LATLLPFCVCLMSFFLLILSL) form a helical membrane-spanning segment. Over 209–235 (RRHIRRMQLSATGCRDPSTEAHVRALK) the chain is Cytoplasmic. Residues 236–256 (AVISFLLLFIAYYLSFLIATS) form a helical membrane-spanning segment. The Extracellular segment spans residues 257–266 (SYFMPETELA). A helical transmembrane segment spans residues 267-287 (VIFGESIALIYPSSHSFILIL). At 288 to 318 (GNNKLRHASLKVIWKVMSILKGRKFQQHKQI) the chain is on the cytoplasmic side.

The protein belongs to the G-protein coupled receptor T2R family.

It is found in the membrane. In terms of biological role, gustducin-coupled receptor implicated in the perception of bitter compounds in the oral cavity and the gastrointestinal tract. Signals through PLCB2 and the calcium-regulated cation channel TRPM5. This Pongo pygmaeus (Bornean orangutan) protein is Taste receptor type 2 member 7 (TAS2R7).